We begin with the raw amino-acid sequence, 356 residues long: Dynein regulatory complex protein 10 (356 aa).

Residues 126–167 (SNREFFEEVRDREERAVAEQEQLKQKLKLQRVELQKAAGTIQ) are a coiled coil. The disordered stretch occupies residues 173–209 (ARGEVSEVQSSTQQSRAAIEGSARAQSEADKSSFQSD). The span at 178–187 (SEVQSSTQQS) shows a compositional bias: low complexity. Positions 197 to 287 (AQSEADKSSF…LRQLQEYNSG (91 aa)) form a coiled coil. The 30-residue stretch at 319-348 (QNHAARVIQSYWRGFKKAREAAKKKAKKLE) folds into the IQ domain.

The protein belongs to the DRC10 family. Component of the nexin-dynein regulatory complex (N-DRC).

It is found in the cytoplasm. The protein localises to the cytoskeleton. It localises to the flagellum axoneme. Its function is as follows. Component of the nexin-dynein regulatory complex (N-DRC), a key regulator of ciliary/flagellar motility which maintains the alignment and integrity of the distal axoneme and regulates microtubule sliding in motile axonemes. This chain is Dynein regulatory complex protein 10, found in Chlamydomonas reinhardtii (Chlamydomonas smithii).